Reading from the N-terminus, the 1256-residue chain is Centrosome and spindle pole-associated protein 1 (1256 aa).

Coiled coils occupy residues 38 to 62 (ADNL…LESD) and 114 to 135 (EDYE…RRYL). A compositionally biased stretch (basic and acidic residues) spans 189-208 (GKEESSEKFRQVEKSTEPKS). Disordered stretches follow at residues 189-244 (GKEE…LTPS) and 381-403 (AENK…CSPF). Polar residues predominate over residues 222–232 (LTSQIQTSCEN). Residue Ser244 is modified to Phosphoserine. A coiled-coil region spans residues 244–270 (SEAYEELLNQRRLEEDRYRQLDDEIEL). Residues 417-449 (QRRKEKYRLELLEQMAEQQRNKRREKDLELRVA) are a coiled coil. A phosphoserine mark is found at Ser459 and Ser527. The stretch at 625-669 (SKQSLQSYQEALQQQIREREERRKKEREEKEEYEAKLEAEMRTYN) forms a coiled coil. Disordered regions lie at residues 735 to 757 (ANKS…VFGE) and 813 to 853 (EYEE…KKEE). The span at 736 to 748 (NKSSGHMQTQSSP) shows a compositional bias: polar residues. A phosphoserine mark is found at Ser901 and Ser920. The segment at 913-932 (SSMSRAQSPPVPARKNQLRA) is disordered. The stretch at 925–964 (ARKNQLRAEEEKKNVIMELSEMRKQLRSEERRLQERLLHM) forms a coiled coil. Ser966 bears the Phosphoserine mark. 2 disordered regions span residues 1114 to 1147 (EDDV…RPNV) and 1232 to 1256 (LNQE…TAHG). Residues 1246-1256 (FTWQGLSTAHG) are compositionally biased toward polar residues.

Interacts with PLEKHG6. Interacts with ARMC9, TOGARAM1, CCDC66, CEP104 and CEP290. Phosphorylated. Phosphorylation increases in colcemide-treated cells. Expressed in adult and fetal brain with enrichment in the cerebellum. Detected in testis.

Its subcellular location is the cytoplasm. The protein localises to the cytoskeleton. It is found in the microtubule organizing center. The protein resides in the centrosome. It localises to the spindle. Its subcellular location is the spindle pole. The protein localises to the cell projection. It is found in the cilium. In terms of biological role, may play a role in cell-cycle-dependent microtubule organization. The sequence is that of Centrosome and spindle pole-associated protein 1 (CSPP1) from Homo sapiens (Human).